The chain runs to 247 residues: Small ribosomal subunit protein uS2 (247 aa).

Belongs to the universal ribosomal protein uS2 family.

In Pseudomonas syringae pv. syringae (strain B728a), this protein is Small ribosomal subunit protein uS2.